Here is a 523-residue protein sequence, read N- to C-terminus: 2-isopropylmalate synthase (523 aa).

One can recognise a Pyruvate carboxyltransferase domain in the interval 5–267 (VIIFDTTLRD…HTAINHQEIW (263 aa)). Positions 14, 202, 204, and 238 each coordinate Mn(2+). Residues 392–523 (RLDYFSVQSG…QHNENNKETV (132 aa)) are regulatory domain.

This sequence belongs to the alpha-IPM synthase/homocitrate synthase family. LeuA type 1 subfamily. In terms of assembly, homodimer. Mn(2+) is required as a cofactor.

The protein resides in the cytoplasm. The catalysed reaction is 3-methyl-2-oxobutanoate + acetyl-CoA + H2O = (2S)-2-isopropylmalate + CoA + H(+). Its pathway is amino-acid biosynthesis; L-leucine biosynthesis; L-leucine from 3-methyl-2-oxobutanoate: step 1/4. In terms of biological role, catalyzes the condensation of the acetyl group of acetyl-CoA with 3-methyl-2-oxobutanoate (2-ketoisovalerate) to form 3-carboxy-3-hydroxy-4-methylpentanoate (2-isopropylmalate). This Escherichia coli O45:K1 (strain S88 / ExPEC) protein is 2-isopropylmalate synthase.